The primary structure comprises 66 residues: Small ribosomal subunit protein bS21 (66 aa).

This sequence belongs to the bacterial ribosomal protein bS21 family.

In Rickettsia africae (strain ESF-5), this protein is Small ribosomal subunit protein bS21.